Here is a 145-residue protein sequence, read N- to C-terminus: Basic phospholipase A2 Vb-2 (145 aa).

An N-terminal signal peptide occupies residues 1–19 (MNPAHLLVLLAVCVSLLGA). A propeptide spanning residues 20–27 (ANIPPQPL) is cleaved from the precursor. 7 disulfide bridges follow: cysteine 38–cysteine 97, cysteine 52–cysteine 144, cysteine 54–cysteine 70, cysteine 69–cysteine 125, cysteine 76–cysteine 118, cysteine 86–cysteine 111, and cysteine 104–cysteine 116. Tyrosine 53, glycine 55, and glycine 57 together coordinate Ca(2+). The active site involves histidine 73. Ca(2+) is bound at residue aspartate 74. The active site involves aspartate 119.

Ca(2+) serves as cofactor. Expressed by the venom gland.

The protein resides in the secreted. It carries out the reaction a 1,2-diacyl-sn-glycero-3-phosphocholine + H2O = a 1-acyl-sn-glycero-3-phosphocholine + a fatty acid + H(+). In terms of biological role, snake venom phospholipase A2 (PLA2) that has only a weak enzymatic activity. Inhibits neuromuscular transmission by blocking acetylcholine release from the nerve termini. PLA2 catalyzes the calcium-dependent hydrolysis of the 2-acyl groups in 3-sn-phosphoglycerides. The sequence is that of Basic phospholipase A2 Vb-2 from Bungarus fasciatus (Banded krait).